The following is a 248-amino-acid chain: Probable transcriptional regulatory protein Ecaj_0351 (248 aa).

Residues 1–21 form a disordered region; the sequence is MAGHSQFANIKHRKGAQDAKR.

Belongs to the TACO1 family.

The protein resides in the cytoplasm. This Ehrlichia canis (strain Jake) protein is Probable transcriptional regulatory protein Ecaj_0351.